Here is a 465-residue protein sequence, read N- to C-terminus: Branched-chain amino acid permease BcaP (465 aa).

The next 13 membrane-spanning stretches (helical) occupy residues 35–55 (LLGIGAIIGTGIFVLTGTGAV), 57–77 (AGPGLTISFVVAALACLFAAL), 103–123 (LMAFIIGWDLILEYMLAVSAV), 133–153 (SFLSGLGIHLPVALTAAPGAV), 159–179 (LFNLPAFVIVMAITYLLYLGI), 188–208 (IMVILKILVVLLFIAVAAVYV), 216–236 (FMPMGFGGVFSAAALVFFAFI), 258–278 (GIIFSLLVCTILYVTVSAIMT), 305–325 (VAGIIDIGAVLGMTTVMLVML), 355–375 (PYVATWFFGTMSALLGSLVPL), 380–400 (KLVNIGTLSAFVLISVAVIVL), 413–432 (CPGVPVIPGLAILFCLFLIL), and 437–456 (VTIVRFLVWLLIGLVIYFLY).

Belongs to the amino acid-polyamine-organocation (APC) superfamily.

It localises to the cell membrane. With respect to regulation, isoleucine uptake is efficiently reduced in the presence of 100-fold excess valine, leucine, alanine, threonine, serine, cysteine, asparagine, and a nonproteinaceous amino acid 4-azaleucine. Its function is as follows. Branched-chain amino acid transport system which is involved in the uptake of isoleucine, valine and probably leucine. Can also transport threonine, and is active as a minor serine permease. May be an amino acid permease of rather broad specificity, because several amino acids, albeit at 100-fold excess, are able to prevent isoleucine uptake. Probably does not transport methionine. Together with BraB and BrnQ, plays an important role in the activation of CodY, a branched-chain amino acid-responsive transcriptional regulator that controls the expression of several dozen transcription units in B.subtilis. In Bacillus subtilis (strain 168), this protein is Branched-chain amino acid permease BcaP.